We begin with the raw amino-acid sequence, 337 residues long: Equatorin (337 aa).

Residues 1–20 form the signal peptide; it reads MDFILLIILSGVFLPDIISL. At 21–183 the chain is on the lumenal side; sequence QPIVGQEPGV…LSELEEIKLK (163 aa). Positions 110 to 130 are disordered; it reads SKPTASGEEEKPSESSRKTST. A compositionally biased stretch (basic and acidic residues) spans 117-126; that stretch reads EEEKPSESSR. Asn-145 carries N-linked (GlcNAc...) asparagine glycosylation. Residues 184 to 204 form a helical membrane-spanning segment; that stretch reads LMLGISLMTLVLLIPLLIFCF. Over 205–337 the chain is Cytoplasmic; the sequence is ATLYKLRHLR…LLNKEGSPSN (133 aa). A disordered region spans residues 259–283; it reads SSEMRRSRTRRSKSKPMDFSAGSNQ. Residue Ser-336 is modified to Phosphoserine.

As to quaternary structure, interacts with SNAP25. Highly N- and O-glycosylated; contains sialic acid. MN9 epitope is O-glycosylated. Sperm specific, including germ cells (at protein level).

It localises to the cytoplasmic vesicle. The protein localises to the secretory vesicle. The protein resides in the acrosome membrane. Its subcellular location is the acrosome inner membrane. It is found in the acrosome outer membrane. It localises to the nucleus. The protein localises to the cytoplasm. In terms of biological role, acrosomal membrane-anchored protein involved in the process of fertilization and in acrosome biogenesis. The protein is Equatorin (Eqtn) of Mus musculus (Mouse).